A 248-amino-acid polypeptide reads, in one-letter code: MQLIPAIDLKDGRCVRLRQGRMDDETVFSDDPVAMAGRWVAAGTRRLHLVDLNGAVAGKPVNAEIIHRIATRYPDLRIQVGGGIRDLDTIRGYREAGVDDLIIGTQAVRRPEFVTEACQAFPGHIIVGLDARDGRVATDGWEQVSEVRAVDLARRFEAAGVNAIVFTDIGRDGMMKGVNIEATRELARAITIPVIASGGVSSLEDVRALCAAAGDGISGAIVGRALYEGSLDLAEAQGLADELCGVKP.

Aspartate 8 functions as the Proton acceptor in the catalytic mechanism. The Proton donor role is filled by aspartate 130.

This sequence belongs to the HisA/HisF family.

The protein resides in the cytoplasm. It catalyses the reaction 1-(5-phospho-beta-D-ribosyl)-5-[(5-phospho-beta-D-ribosylamino)methylideneamino]imidazole-4-carboxamide = 5-[(5-phospho-1-deoxy-D-ribulos-1-ylimino)methylamino]-1-(5-phospho-beta-D-ribosyl)imidazole-4-carboxamide. Its pathway is amino-acid biosynthesis; L-histidine biosynthesis; L-histidine from 5-phospho-alpha-D-ribose 1-diphosphate: step 4/9. In Alkalilimnicola ehrlichii (strain ATCC BAA-1101 / DSM 17681 / MLHE-1), this protein is 1-(5-phosphoribosyl)-5-[(5-phosphoribosylamino)methylideneamino] imidazole-4-carboxamide isomerase.